The chain runs to 269 residues: Ribosomal RNA large subunit methyltransferase E (269 aa).

S-adenosyl-L-methionine is bound by residues G48, W50, D68, D86, and D111. The active-site Proton acceptor is the K151. Residues 198 to 256 enclose the TRAM domain; the sequence is PVAAGDRIEVTVEERGDEGDGIAYVEGYSIFVSDADVGETVTVEVVDAKPRFGFATRVD.

The protein belongs to the class I-like SAM-binding methyltransferase superfamily. RNA methyltransferase RlmE family.

It localises to the cytoplasm. The enzyme catalyses uridine(2552) in 23S rRNA + S-adenosyl-L-methionine = 2'-O-methyluridine(2552) in 23S rRNA + S-adenosyl-L-homocysteine + H(+). Functionally, specifically methylates the uridine in position 2552 of 23S rRNA at the 2'-O position of the ribose in the fully assembled 50S ribosomal subunit. In Halorubrum lacusprofundi (strain ATCC 49239 / DSM 5036 / JCM 8891 / ACAM 34), this protein is Ribosomal RNA large subunit methyltransferase E.